We begin with the raw amino-acid sequence, 223 residues long: Sigma non-opioid intracellular receptor 1 (223 aa).

Residues 1-9 lie on the Lumenal side of the membrane; that stretch reads MQWAVGRRW. Residues 2-8 form a targeting to endoplasmic reticulum-associated lipid droplets region; it reads QWAVGRR. A helical membrane pass occupies residues 10-30; that stretch reads LWVALFLAAVAVLTQIVWLWL. The Cytoplasmic portion of the chain corresponds to 31–223; that stretch reads GTQNFVFQRE…LTTYLFGQDP (193 aa). Residues 99–106 are important for ligand-binding; it reads SLSEYVLL. A C-terminal hydrophobic region region spans residues 177-223; that stretch reads VIPSTLGFALADTVFSTQDFLTLFYTLRVYARALQLELTTYLFGQDP.

It belongs to the ERG2 family. Homotrimer. Forms a ternary complex with ANK2 and ITPR3. The complex is disrupted by agonists. Interacts with KCNA4. Interacts with KCNA2; cocaine consumption leads to increased interaction. Interacts with RNF112 in an oxidative stress-regulated manner. In terms of tissue distribution, ubiquitously expressed with higher expression in liver, kidney and steroid-producing tissues such as placenta, ovary and adrenal gland.

The protein localises to the nucleus inner membrane. It localises to the nucleus outer membrane. Its subcellular location is the nucleus envelope. It is found in the cytoplasmic vesicle. The protein resides in the endoplasmic reticulum membrane. The protein localises to the membrane. It localises to the lipid droplet. Its subcellular location is the cell junction. It is found in the cell membrane. The protein resides in the cell projection. The protein localises to the growth cone. It localises to the postsynaptic density membrane. Its function is as follows. Functions in lipid transport from the endoplasmic reticulum and is involved in a wide array of cellular functions probably through regulation of the biogenesis of lipid microdomains at the plasma membrane. Involved in the regulation of different receptors it plays a role in BDNF signaling and EGF signaling. Also regulates ion channels like the potassium channel and could modulate neurotransmitter release. Plays a role in calcium signaling through modulation together with ANK2 of the ITP3R-dependent calcium efflux at the endoplasmic reticulum. Plays a role in several other cell functions including proliferation, survival and death. Originally identified for its ability to bind various psychoactive drugs it is involved in learning processes, memory and mood alteration. Necessary for proper mitochondrial axonal transport in motor neurons, in particular the retrograde movement of mitochondria. Plays a role in protecting cells against oxidative stress-induced cell death via its interaction with RNF112. This is Sigma non-opioid intracellular receptor 1 (SIGMAR1) from Cavia porcellus (Guinea pig).